The chain runs to 514 residues: 2-isopropylmalate synthase (514 aa).

Residues 5–267 enclose the Pyruvate carboxyltransferase domain; that stretch reads LIIFDTTLRD…HTDIETREIV (263 aa). Asp14, His202, His204, and Asn238 together coordinate Mn(2+). A regulatory domain region spans residues 393–514; it reads KLVALRVCSE…QRTHPQVGDV (122 aa).

This sequence belongs to the alpha-IPM synthase/homocitrate synthase family. LeuA type 1 subfamily. In terms of assembly, homodimer. Requires Mn(2+) as cofactor.

It is found in the cytoplasm. The enzyme catalyses 3-methyl-2-oxobutanoate + acetyl-CoA + H2O = (2S)-2-isopropylmalate + CoA + H(+). It functions in the pathway amino-acid biosynthesis; L-leucine biosynthesis; L-leucine from 3-methyl-2-oxobutanoate: step 1/4. Catalyzes the condensation of the acetyl group of acetyl-CoA with 3-methyl-2-oxobutanoate (2-ketoisovalerate) to form 3-carboxy-3-hydroxy-4-methylpentanoate (2-isopropylmalate). In Methylococcus capsulatus (strain ATCC 33009 / NCIMB 11132 / Bath), this protein is 2-isopropylmalate synthase.